A 203-amino-acid chain; its full sequence is dITP/XTP pyrophosphatase (203 aa).

Residue 8-13 (TANKGK) coordinates substrate. The Mg(2+) site is built by Glu-41 and Asp-70. The active-site Proton acceptor is the Asp-70. Substrate-binding positions include Ser-71, 153-156 (FGYD), Lys-176, and 181-182 (HR).

It belongs to the HAM1 NTPase family. In terms of assembly, homodimer. Mg(2+) is required as a cofactor.

The catalysed reaction is XTP + H2O = XMP + diphosphate + H(+). The enzyme catalyses dITP + H2O = dIMP + diphosphate + H(+). It carries out the reaction ITP + H2O = IMP + diphosphate + H(+). Functionally, pyrophosphatase that catalyzes the hydrolysis of nucleoside triphosphates to their monophosphate derivatives, with a high preference for the non-canonical purine nucleotides XTP (xanthosine triphosphate), dITP (deoxyinosine triphosphate) and ITP. Seems to function as a house-cleaning enzyme that removes non-canonical purine nucleotides from the nucleotide pool, thus preventing their incorporation into DNA/RNA and avoiding chromosomal lesions. In Listeria innocua serovar 6a (strain ATCC BAA-680 / CLIP 11262), this protein is dITP/XTP pyrophosphatase.